A 149-amino-acid polypeptide reads, in one-letter code: Small ribosomal subunit protein uS11z (149 aa).

Positions 130 to 149 (VTPVPTDSTRRKGGRRGRRL) are disordered. Positions 140-149 (RKGGRRGRRL) are enriched in basic residues.

Belongs to the universal ribosomal protein uS11 family.

The chain is Small ribosomal subunit protein uS11z from Zea mays (Maize).